The following is a 273-amino-acid chain: NADPH-dependent 7-cyano-7-deazaguanine reductase (273 aa).

81–83 serves as a coordination point for substrate; that stretch reads VES. 83 to 84 lines the NADPH pocket; sequence SK. C179 (thioimide intermediate) is an active-site residue. The active-site Proton donor is D186. 218–219 lines the substrate pocket; that stretch reads AE. 247-248 is an NADPH binding site; it reads RG.

Belongs to the GTP cyclohydrolase I family. QueF type 2 subfamily. Homodimer.

It is found in the cytoplasm. The enzyme catalyses 7-aminomethyl-7-carbaguanine + 2 NADP(+) = 7-cyano-7-deazaguanine + 2 NADPH + 3 H(+). It participates in tRNA modification; tRNA-queuosine biosynthesis. Catalyzes the NADPH-dependent reduction of 7-cyano-7-deazaguanine (preQ0) to 7-aminomethyl-7-deazaguanine (preQ1). The polypeptide is NADPH-dependent 7-cyano-7-deazaguanine reductase (Rickettsia prowazekii (strain Madrid E)).